The chain runs to 198 residues: Cerebellin-4 (198 aa).

Positions 1–24 are cleaved as a signal peptide; it reads MGSARRALSVVPAVLLILVLPVWA. 2 N-linked (GlcNAc...) asparagine glycosylation sites follow: Asn26 and Asn85. The 136-residue stretch at 63-198 folds into the C1q domain; sequence AANSKVAFSA…TFSGFLVFPL (136 aa).

As to quaternary structure, homohexamer; disulfide-linked homotrimers. The trimers are assembled via the globular C1q domains. The trimers associate via N-terminal cysteine residues to form disulfide-linked hexamers. May form oligomers with CBLN1, CBLN2 and CBLN3 prior to secretion. Once secreted, does not interact with other CBLN family members. Strongly interacts with DCC in a NTN1-displaceable fashion. Weakly binds to NRXN1 and NRXN2 long and short isoforms produced by alternative promoter usage. Interaction with NRXN3 short isoform is hardly detectable; no interaction at all with NRXN3 long isoform. Does not interact with NEO1, GRID1 and GRID2. In terms of processing, sialoglycoprotein. Expressed in brain with high levels in particular thalamic nuclei. In the thalamus, predominantly expressed in neurons within the parafascicular nucleus. Found in the hippocampus, mostly in the dendrites and somata of pyramidal neurons (at protein level). Very low or no expression in most other brain regions. Highly expressed in the ventral medial habenula.

The protein localises to the secreted. It is found in the synapse. In terms of biological role, acts as a synaptic organizer in specific subsets of neurons in the brain. Essential for the formation and maintenance of inhibitory GABAergic synapses. Promotes the development of dendrite-targeting inhibitory GABAergic synapses made by somatostatin-positive interneurons. May contribute to the function of ventral medial habenula region of the brain implicated in the regulation of anxiety-related behaviors. May play a role in CBLN3 export from the endoplasmic reticulum and secretion. This Mus musculus (Mouse) protein is Cerebellin-4 (Cbln4).